Reading from the N-terminus, the 361-residue chain is Peptide chain release factor 1 (361 aa).

Residue glutamine 238 is modified to N5-methylglutamine.

The protein belongs to the prokaryotic/mitochondrial release factor family. Methylated by PrmC. Methylation increases the termination efficiency of RF1.

The protein localises to the cytoplasm. Functionally, peptide chain release factor 1 directs the termination of translation in response to the peptide chain termination codons UAG and UAA. The chain is Peptide chain release factor 1 from Mesomycoplasma hyopneumoniae (strain 232) (Mycoplasma hyopneumoniae).